The primary structure comprises 202 residues: uncharacterized protein (202 aa).

The tract at residues 164–202 (DTDSEQESDQESDQDSDQESEESDQESDQDSDQDSEGSE) is disordered. The segment covering 165–202 (TDSEQESDQESDQDSDQESEESDQESDQDSDQDSEGSE) has biased composition (acidic residues).

This is an uncharacterized protein from Acanthamoeba polyphaga mimivirus (APMV).